Here is a 137-residue protein sequence, read N- to C-terminus: Putative pre-16S rRNA nuclease (137 aa).

This sequence belongs to the YqgF nuclease family.

It localises to the cytoplasm. In terms of biological role, could be a nuclease involved in processing of the 5'-end of pre-16S rRNA. This is Putative pre-16S rRNA nuclease from Bacillus cereus (strain 03BB102).